A 466-amino-acid polypeptide reads, in one-letter code: ATP synthase subunit beta (466 aa).

148 to 155 serves as a coordination point for ATP; sequence GGAGVGKT.

It belongs to the ATPase alpha/beta chains family. As to quaternary structure, F-type ATPases have 2 components, CF(1) - the catalytic core - and CF(0) - the membrane proton channel. CF(1) has five subunits: alpha(3), beta(3), gamma(1), delta(1), epsilon(1). CF(0) has three main subunits: a(1), b(2) and c(9-12). The alpha and beta chains form an alternating ring which encloses part of the gamma chain. CF(1) is attached to CF(0) by a central stalk formed by the gamma and epsilon chains, while a peripheral stalk is formed by the delta and b chains.

It localises to the cell inner membrane. It carries out the reaction ATP + H2O + 4 H(+)(in) = ADP + phosphate + 5 H(+)(out). Its function is as follows. Produces ATP from ADP in the presence of a proton gradient across the membrane. The catalytic sites are hosted primarily by the beta subunits. The polypeptide is ATP synthase subunit beta (Xylella fastidiosa (strain M12)).